A 214-amino-acid polypeptide reads, in one-letter code: Large ribosomal subunit protein uL3 (214 aa).

At glutamine 155 the chain carries N5-methylglutamine.

Belongs to the universal ribosomal protein uL3 family. As to quaternary structure, part of the 50S ribosomal subunit. Forms a cluster with proteins L14 and L19. Post-translationally, methylated by PrmB.

In terms of biological role, one of the primary rRNA binding proteins, it binds directly near the 3'-end of the 23S rRNA, where it nucleates assembly of the 50S subunit. In Acinetobacter baumannii (strain ACICU), this protein is Large ribosomal subunit protein uL3.